The chain runs to 62 residues: Large ribosomal subunit protein bL28 (62 aa).

Belongs to the bacterial ribosomal protein bL28 family.

This chain is Large ribosomal subunit protein bL28, found in Ruminiclostridium cellulolyticum (strain ATCC 35319 / DSM 5812 / JCM 6584 / H10) (Clostridium cellulolyticum).